Reading from the N-terminus, the 428-residue chain is tRNA modification GTPase MnmE (428 aa).

Positions 20, 77, and 117 each coordinate (6S)-5-formyl-5,6,7,8-tetrahydrofolate. A TrmE-type G domain is found at 213–351 (GFEVAIIGPP…LVQRISDVLK (139 aa)). A K(+)-binding site is contributed by Asn-223. GTP-binding positions include 223-228 (NAGKST), 242-248 (SEVAGTT), and 267-270 (DTAG). Mg(2+) is bound at residue Ser-227. Positions 242, 244, and 247 each coordinate K(+). Thr-248 provides a ligand contact to Mg(2+). Residue Lys-428 coordinates (6S)-5-formyl-5,6,7,8-tetrahydrofolate.

The protein belongs to the TRAFAC class TrmE-Era-EngA-EngB-Septin-like GTPase superfamily. TrmE GTPase family. As to quaternary structure, homodimer. Heterotetramer of two MnmE and two MnmG subunits. K(+) serves as cofactor.

The protein resides in the cytoplasm. Exhibits a very high intrinsic GTPase hydrolysis rate. Involved in the addition of a carboxymethylaminomethyl (cmnm) group at the wobble position (U34) of certain tRNAs, forming tRNA-cmnm(5)s(2)U34. The polypeptide is tRNA modification GTPase MnmE (Ruegeria pomeroyi (strain ATCC 700808 / DSM 15171 / DSS-3) (Silicibacter pomeroyi)).